The chain runs to 35 residues: MTFAELGMAFWHDLAAPVIAGILASMIVNWLNKRK.

A helical membrane pass occupies residues Phe-10–Asn-32.

This sequence belongs to the Ldr toxic peptide family.

It localises to the cell inner membrane. Functionally, toxic component of a type I toxin-antitoxin (TA) system. Overexpression causes rapid cell killing and nucleoid condensation of the host cell. Overexpression induces stress-response and a number of membrane protein genes. May inhibit ATP synthesis due to its insertion in the cell inner membrane. This is Small toxic polypeptide LdrD (ldrD) from Escherichia coli (strain K12).